A 285-amino-acid chain; its full sequence is MAATQELSKGGVEEAVEEDDPAALKPGAAPFGNFPHYSRFHPPEQRLRLLPPELLRQLFPPEGPERRPILGLDVGCNSGDLSMALYKHFLSPHDGETSSGTSRELRLLCCDIDPVLVERAENGCRFPDALTFITLDIMDQESRKVPLSSFLSQFGRSVFDIVFCMSVTMWIHLNHGDRGLCEFLAHVSSLCSYLLVEPQPWKCYRAAARRLRKLGLHNFDHFRSLAIRGDMASQIVRILTQDHGMELACCFGNTSWDRSLLLFRAKHTEETQAIPESSTKETGTD.

A disordered region spans residues 1–28 (MAATQELSKGGVEEAVEEDDPAALKPGA). S-adenosyl-L-methionine is bound by residues R46, N77, D111, 136–137 (DI), and M165. Residues 53-275 (ELLRQLFPPE…KHTEETQAIP (223 aa)) enclose the Bin3-type SAM domain.

It belongs to the methyltransferase superfamily. As to quaternary structure, interacts with DICER1; the interaction may be mediated by RNA.

It is found in the cytoplasm. It catalyses the reaction a 5'-end 5'-phospho-ribonucleoside-RNA + S-adenosyl-L-methionine = a 5'-end (5'-methylphospho)-ribonucleoside-RNA + S-adenosyl-L-homocysteine. The catalysed reaction is a 5'-end 5'-phospho-ribonucleoside-RNA + 2 S-adenosyl-L-methionine = a 5'-end (5'-bismethylphospho)-ribonucleoside-RNA + 2 S-adenosyl-L-homocysteine. In terms of biological role, O-methyltransferase that specifically monomethylates 5'-monophosphate of cytoplasmic histidyl tRNA (tRNA(His)), acting as a capping enzyme by protecting tRNA(His) from cleavage by DICER1. Also able, with less efficiently, to methylate the 5' monophosphate of a subset of pre-miRNAs, acting as a negative regulator of miRNA processing. The 5' monophosphate of pre-miRNAs is recognized by DICER1 and is required for pre-miRNAs processing: methylation at this position reduces the processing of pre-miRNAs by DICER1. Was also reported to mediate dimethylation of pre-miR-145; however dimethylation cannot be reproduced by another group which observes a monomethylation of pre-miR-145. In Rattus norvegicus (Rat), this protein is RNA 5'-monophosphate methyltransferase.